The primary structure comprises 800 residues: Phenylalanine--tRNA ligase beta subunit (800 aa).

The region spanning 39–154 is the tRNA-binding domain; sequence TKDIKNLVVG…ESQVPGTDAL (116 aa). The B5 domain maps to 408-483; sequence AFITPIDITA…RIYGYDDIPS (76 aa). D461, D467, E470, and E471 together coordinate Mg(2+). The 93-residue stretch at 708 to 800 folds into the FDX-ACB domain; the sequence is PIFPGMSRDI…ALIEQGAVIR (93 aa).

The protein belongs to the phenylalanyl-tRNA synthetase beta subunit family. Type 1 subfamily. In terms of assembly, tetramer of two alpha and two beta subunits. Requires Mg(2+) as cofactor.

It localises to the cytoplasm. It carries out the reaction tRNA(Phe) + L-phenylalanine + ATP = L-phenylalanyl-tRNA(Phe) + AMP + diphosphate + H(+). This Staphylococcus aureus (strain bovine RF122 / ET3-1) protein is Phenylalanine--tRNA ligase beta subunit.